Here is a 452-residue protein sequence, read N- to C-terminus: Friend leukemia integration 1 transcription factor (452 aa).

A Phosphoserine modification is found at serine 39. The PNT domain occupies 112 to 198 (PPPPNMTTNE…SHLSYLRESS (87 aa)). The tract at residues 209–271 (DQSSRLSVKE…PYQILGPTSS (63 aa)) is disordered. Positions 215–226 (SVKEDPSYDSVR) are enriched in basic and acidic residues. Residues 248 to 257 (QTISKNTEQR) show a composition bias toward polar residues. A DNA-binding region (ETS) is located at residues 281 to 361 (IQLWQFLLEL…HGKRYAYKFD (81 aa)). The disordered stretch occupies residues 433–452 (NPNVPRHPNTHVPSHLGSYY).

This sequence belongs to the ETS family. Can form homodimers or heterodimers with ETV6/TEL1.

The protein localises to the nucleus. Functionally, sequence-specific transcriptional activator. Recognizes the DNA sequence 5'-C[CA]GGAAGT-3'. The sequence is that of Friend leukemia integration 1 transcription factor (FLI1) from Homo sapiens (Human).